A 393-amino-acid chain; its full sequence is Phosphopentomutase (393 aa).

Mn(2+) is bound by residues D11, D282, H287, D323, H324, and H335.

It belongs to the phosphopentomutase family. Mn(2+) is required as a cofactor.

It localises to the cytoplasm. The enzyme catalyses 2-deoxy-alpha-D-ribose 1-phosphate = 2-deoxy-D-ribose 5-phosphate. It catalyses the reaction alpha-D-ribose 1-phosphate = D-ribose 5-phosphate. Its pathway is carbohydrate degradation; 2-deoxy-D-ribose 1-phosphate degradation; D-glyceraldehyde 3-phosphate and acetaldehyde from 2-deoxy-alpha-D-ribose 1-phosphate: step 1/2. Isomerase that catalyzes the conversion of deoxy-ribose 1-phosphate (dRib-1-P) and ribose 1-phosphate (Rib-1-P) to deoxy-ribose 5-phosphate (dRib-5-P) and ribose 5-phosphate (Rib-5-P), respectively. This is Phosphopentomutase from Caldanaerobacter subterraneus subsp. tengcongensis (strain DSM 15242 / JCM 11007 / NBRC 100824 / MB4) (Thermoanaerobacter tengcongensis).